The following is a 114-amino-acid chain: DNA-binding protein Mbur_0117 (114 aa).

A disordered region spans residues 14–37 (ELQQQQSSPQNDAQAAYQQEQAQA). Over residues 16 to 35 (QQQQSSPQNDAQAAYQQEQA) the composition is skewed to low complexity.

Belongs to the PDCD5 family.

This Methanococcoides burtonii (strain DSM 6242 / NBRC 107633 / OCM 468 / ACE-M) protein is DNA-binding protein Mbur_0117.